A 66-amino-acid chain; its full sequence is Large ribosomal subunit protein uL29 (66 aa).

The protein belongs to the universal ribosomal protein uL29 family.

The protein is Large ribosomal subunit protein uL29 of Rhizobium etli (strain ATCC 51251 / DSM 11541 / JCM 21823 / NBRC 15573 / CFN 42).